The sequence spans 1024 residues: Gamma-tubulin complex component 5 (1024 aa).

Disordered stretches follow at residues 153 to 203, 523 to 545, and 853 to 873; these read IGLG…GGPQ, NEDK…SSRQ, and SQAK…GPPK. Residues 189–198 show a composition bias toward basic and acidic residues; sequence TPLEEQDHNR. Residues 529–543 show a composition bias toward low complexity; that stretch reads DSASASSGSDQGPSS. Positions 853–864 are enriched in basic and acidic residues; that stretch reads SQAKEDIPRDQD.

Belongs to the TUBGCP family. In terms of assembly, component of the gamma-tubulin ring complex (gTuRC) consisting of TUBGCP2, TUBGCP3, TUBGCP4, TUBGCP5 and TUBGCP6 and gamma-tubulin TUBG1 or TUBG2. TUBGCP2, TUBGCP3, TUBGCP4, TUBGCP5 and TUBGCP6 assemble in a 5:5:2:1:1 stoichiometry; each is associated with a gamma-tubulin, thereby arranging 14 gamma-tubulins in a helical manner. Gamma-tubulin at the first position is blocked by TUBGCP3 at the last position, allowing 13 protafilaments to grow into a microtubule. The gTuRC (via TUBGCP3 and TUBGCP6) interacts with ACTB and MZT1; the interactions form a luminal bridge that stabilizes the initial structure during complex assembly. The gTuRC (via TUBGCP2) interacts with MZT2A/MZT2B and CDK5RAP2 (via CM1 motif); the interactions play a role in gTuRC activation.

The protein localises to the cytoplasm. It localises to the cytoskeleton. The protein resides in the microtubule organizing center. It is found in the centrosome. In terms of biological role, component of the gamma-tubulin ring complex (gTuRC) which mediates microtubule nucleation. The gTuRC regulates the minus-end nucleation of alpha-beta tubulin heterodimers that grow into microtubule protafilaments, a critical step in centrosome duplication and spindle formation. The sequence is that of Gamma-tubulin complex component 5 (Tubgcp5) from Mus musculus (Mouse).